A 329-amino-acid polypeptide reads, in one-letter code: Acetyl-coenzyme A carboxylase carboxyl transferase subunit alpha (329 aa).

Positions 40–294 (QLETLAARRR…REAIERHLDD (255 aa)) constitute a CoA carboxyltransferase C-terminal domain.

This sequence belongs to the AccA family. Acetyl-CoA carboxylase is a heterohexamer composed of biotin carboxyl carrier protein (AccB), biotin carboxylase (AccC) and two subunits each of ACCase subunit alpha (AccA) and ACCase subunit beta (AccD).

Its subcellular location is the cytoplasm. It catalyses the reaction N(6)-carboxybiotinyl-L-lysyl-[protein] + acetyl-CoA = N(6)-biotinyl-L-lysyl-[protein] + malonyl-CoA. The protein operates within lipid metabolism; malonyl-CoA biosynthesis; malonyl-CoA from acetyl-CoA: step 1/1. Its function is as follows. Component of the acetyl coenzyme A carboxylase (ACC) complex. First, biotin carboxylase catalyzes the carboxylation of biotin on its carrier protein (BCCP) and then the CO(2) group is transferred by the carboxyltransferase to acetyl-CoA to form malonyl-CoA. The sequence is that of Acetyl-coenzyme A carboxylase carboxyl transferase subunit alpha from Prochlorococcus marinus (strain MIT 9303).